The chain runs to 238 residues: uncharacterized protein (238 aa).

Disordered regions lie at residues methionine 1–alanine 51 and isoleucine 214–alanine 238. Positions alanine 16–cysteine 31 are enriched in low complexity.

This is an uncharacterized protein from Streptomyces griseus.